Here is a 218-residue protein sequence, read N- to C-terminus: Large ribosomal subunit protein uL3 (218 aa).

It belongs to the universal ribosomal protein uL3 family. As to quaternary structure, part of the 50S ribosomal subunit. Forms a cluster with proteins L14 and L19.

One of the primary rRNA binding proteins, it binds directly near the 3'-end of the 23S rRNA, where it nucleates assembly of the 50S subunit. In Syntrophus aciditrophicus (strain SB), this protein is Large ribosomal subunit protein uL3.